The following is a 507-amino-acid chain: MFS-type transporter acdC (507 aa).

The segment at 1–50 (MSPNAPAVDIGAAPSLDTPEGDTKQPAEDHVEKDSNLVDWDGPDDPEHPQ) is disordered. Basic and acidic residues predominate over residues 21–36 (GDTKQPAEDHVEKDSN). A glycan (N-linked (GlcNAc...) asparagine) is linked at Asn-51. The helical transmembrane segment at 58 to 78 (WGITFSLASMTMWITFSSSVL) threads the bilayer. Asn-90 carries N-linked (GlcNAc...) asparagine glycosylation. 5 helical membrane passes run 95–115 (VMPL…LCWA), 125–145 (LPTF…AVAP), 155–175 (FFVG…MADI), 186–206 (PFFF…GGFI), and 215–235 (WTAW…LLIV). N-linked (GlcNAc...) asparagine glycosylation occurs at Asn-257. The next 6 membrane-spanning stretches (helical) occupy residues 290 to 310 (PILI…YLFL), 328 to 348 (IAGL…GIII), 371 to 391 (LVEM…FGWA), 395 to 415 (HWMV…VLFM), 442 to 462 (FLGG…GVDW), and 466 to 486 (ILGF…IFGA).

It belongs to the major facilitator superfamily. CAR1 family.

The protein resides in the membrane. Functionally, MFS-type transporter; part of the gene cluster that mediates the biosynthesis of aspcandine, a pyrrolobenzazepine alkaloid. The chain is MFS-type transporter acdC from Aspergillus candidus.